The primary structure comprises 104 residues: uncharacterized protein (104 aa).

It is found in the mitochondrion. This is an uncharacterized protein from Claviceps purpurea (Ergot fungus).